A 323-amino-acid chain; its full sequence is Fructose-1,6-bisphosphatase class 1 (323 aa).

Positions 84, 103, 105, and 106 each coordinate Mg(2+). Substrate is bound by residues 106-109, N198, and K264; that span reads DGSS. E270 is a binding site for Mg(2+).

It belongs to the FBPase class 1 family. Homotetramer. Requires Mg(2+) as cofactor.

It localises to the cytoplasm. It carries out the reaction beta-D-fructose 1,6-bisphosphate + H2O = beta-D-fructose 6-phosphate + phosphate. The protein operates within carbohydrate biosynthesis; gluconeogenesis. The polypeptide is Fructose-1,6-bisphosphatase class 1 (Pseudoalteromonas atlantica (strain T6c / ATCC BAA-1087)).